The following is a 248-amino-acid chain: 4-hydroxy-tetrahydrodipicolinate reductase (248 aa).

NAD(+) is bound by residues 9 to 14, 77 to 79, and 104 to 107; these read GAKGRV, GTT, and APNF. The active-site Proton donor/acceptor is the histidine 134. Histidine 135 contacts (S)-2,3,4,5-tetrahydrodipicolinate. The active-site Proton donor is lysine 138. 144 to 145 is a (S)-2,3,4,5-tetrahydrodipicolinate binding site; sequence GT.

The protein belongs to the DapB family.

It is found in the cytoplasm. It catalyses the reaction (S)-2,3,4,5-tetrahydrodipicolinate + NAD(+) + H2O = (2S,4S)-4-hydroxy-2,3,4,5-tetrahydrodipicolinate + NADH + H(+). It carries out the reaction (S)-2,3,4,5-tetrahydrodipicolinate + NADP(+) + H2O = (2S,4S)-4-hydroxy-2,3,4,5-tetrahydrodipicolinate + NADPH + H(+). The protein operates within amino-acid biosynthesis; L-lysine biosynthesis via DAP pathway; (S)-tetrahydrodipicolinate from L-aspartate: step 4/4. Functionally, catalyzes the conversion of 4-hydroxy-tetrahydrodipicolinate (HTPA) to tetrahydrodipicolinate. The protein is 4-hydroxy-tetrahydrodipicolinate reductase of Corynebacterium efficiens (strain DSM 44549 / YS-314 / AJ 12310 / JCM 11189 / NBRC 100395).